The following is a 626-amino-acid chain: Chaperone protein HtpG (626 aa).

Residues 1 to 339 are a; substrate-binding; the sequence is MSTNQETRGF…SNDLPLNVSR (339 aa). Residues 340 to 555 are b; sequence EILQDNKVTA…NDQMTTQMAK (216 aa). The segment at 556 to 626 is c; that stretch reads LFAAAGQPVP…FIKRINKLLG (71 aa).

This sequence belongs to the heat shock protein 90 family. As to quaternary structure, homodimer.

It is found in the cytoplasm. Its function is as follows. Molecular chaperone. Has ATPase activity. This is Chaperone protein HtpG from Aggregatibacter actinomycetemcomitans (Actinobacillus actinomycetemcomitans).